Reading from the N-terminus, the 506-residue chain is Bifunctional purine biosynthesis protein PurH (506 aa).

The MGS-like domain maps to 1–146 (MARLALLSVS…KNFAHLTVLC (146 aa)).

The protein belongs to the PurH family.

It carries out the reaction (6R)-10-formyltetrahydrofolate + 5-amino-1-(5-phospho-beta-D-ribosyl)imidazole-4-carboxamide = 5-formamido-1-(5-phospho-D-ribosyl)imidazole-4-carboxamide + (6S)-5,6,7,8-tetrahydrofolate. The enzyme catalyses IMP + H2O = 5-formamido-1-(5-phospho-D-ribosyl)imidazole-4-carboxamide. It functions in the pathway purine metabolism; IMP biosynthesis via de novo pathway; 5-formamido-1-(5-phospho-D-ribosyl)imidazole-4-carboxamide from 5-amino-1-(5-phospho-D-ribosyl)imidazole-4-carboxamide (10-formyl THF route): step 1/1. The protein operates within purine metabolism; IMP biosynthesis via de novo pathway; IMP from 5-formamido-1-(5-phospho-D-ribosyl)imidazole-4-carboxamide: step 1/1. In Nostoc sp. (strain PCC 7120 / SAG 25.82 / UTEX 2576), this protein is Bifunctional purine biosynthesis protein PurH.